The following is a 282-amino-acid chain: Pantothenate synthetase (282 aa).

30–37 contributes to the ATP binding site; that stretch reads MGNLHLGH. The active-site Proton donor is the H37. Q61 is a binding site for (R)-pantoate. Position 61 (Q61) interacts with beta-alanine. ATP is bound at residue 149 to 152; that stretch reads GQKD. Q155 contacts (R)-pantoate. ATP contacts are provided by residues I178 and 186–189; that span reads MSSR.

The protein belongs to the pantothenate synthetase family. In terms of assembly, homodimer.

The protein localises to the cytoplasm. The catalysed reaction is (R)-pantoate + beta-alanine + ATP = (R)-pantothenate + AMP + diphosphate + H(+). Its pathway is cofactor biosynthesis; (R)-pantothenate biosynthesis; (R)-pantothenate from (R)-pantoate and beta-alanine: step 1/1. Its function is as follows. Catalyzes the condensation of pantoate with beta-alanine in an ATP-dependent reaction via a pantoyl-adenylate intermediate. The polypeptide is Pantothenate synthetase (Shewanella piezotolerans (strain WP3 / JCM 13877)).